Consider the following 456-residue polypeptide: Adenylosuccinate lyase (456 aa).

N(6)-(1,2-dicarboxyethyl)-AMP contacts are provided by residues 15–16, 90–92, and 122–123; these read RY, NHD, and TS. The Proton donor/acceptor role is filled by His-171. Gln-248 is a binding site for N(6)-(1,2-dicarboxyethyl)-AMP. Residue Ser-296 is the Proton donor/acceptor of the active site. N(6)-(1,2-dicarboxyethyl)-AMP-binding positions include Ser-297, 302-304, Asn-310, Arg-336, and 341-345; these read KVN and STVLR.

The protein belongs to the lyase 1 family. Adenylosuccinate lyase subfamily. As to quaternary structure, homotetramer.

It catalyses the reaction N(6)-(1,2-dicarboxyethyl)-AMP = fumarate + AMP. It carries out the reaction (2S)-2-[5-amino-1-(5-phospho-beta-D-ribosyl)imidazole-4-carboxamido]succinate = 5-amino-1-(5-phospho-beta-D-ribosyl)imidazole-4-carboxamide + fumarate. The catalysed reaction is (2S)-2-amino-2'-deoxyadenylo-succinate = dZMP + fumarate. It functions in the pathway purine metabolism; AMP biosynthesis via de novo pathway; AMP from IMP: step 2/2. It participates in purine metabolism; IMP biosynthesis via de novo pathway; 5-amino-1-(5-phospho-D-ribosyl)imidazole-4-carboxamide from 5-amino-1-(5-phospho-D-ribosyl)imidazole-4-carboxylate: step 2/2. The protein operates within purine metabolism. In terms of biological role, catalyzes two reactions in de novo purine nucleotide biosynthesis. Catalyzes the breakdown of 5-aminoimidazole- (N-succinylocarboxamide) ribotide (SAICAR or 2-[5-amino-1-(5-phospho-beta-D-ribosyl)imidazole-4-carboxamido]succinate) to 5-aminoimidazole-4-carboxamide ribotide (AICAR or 5-amino-1-(5-phospho-beta-D-ribosyl)imidazole-4-carboxamide) and fumarate, and of adenylosuccinate (ADS or N(6)-(1,2-dicarboxyethyl)-AMP) to adenosine monophosphate (AMP) and fumarate. (Microbial infection) Catalyzes the conversion of 2-amino-2'-deoxyadenylo-succinate to dZMP and fumarate, when the bacterium is infected by a phage that produces the substrate of this reaction, a step in the synthesis of dZTP (2-amino-2'-deoxyadenosine 5'-triphosphate), which is a nucleotide then used by the phage as a DNA polymerase substrate. This chain is Adenylosuccinate lyase, found in Vibrio cholerae serotype O1 (strain ATCC 39541 / Classical Ogawa 395 / O395).